The primary structure comprises 248 residues: Leucyl/phenylalanyl-tRNA--protein transferase (248 aa).

It belongs to the L/F-transferase family.

The protein resides in the cytoplasm. The enzyme catalyses N-terminal L-lysyl-[protein] + L-leucyl-tRNA(Leu) = N-terminal L-leucyl-L-lysyl-[protein] + tRNA(Leu) + H(+). It catalyses the reaction N-terminal L-arginyl-[protein] + L-leucyl-tRNA(Leu) = N-terminal L-leucyl-L-arginyl-[protein] + tRNA(Leu) + H(+). The catalysed reaction is L-phenylalanyl-tRNA(Phe) + an N-terminal L-alpha-aminoacyl-[protein] = an N-terminal L-phenylalanyl-L-alpha-aminoacyl-[protein] + tRNA(Phe). Its function is as follows. Functions in the N-end rule pathway of protein degradation where it conjugates Leu, Phe and, less efficiently, Met from aminoacyl-tRNAs to the N-termini of proteins containing an N-terminal arginine or lysine. The protein is Leucyl/phenylalanyl-tRNA--protein transferase of Rhizorhabdus wittichii (strain DSM 6014 / CCUG 31198 / JCM 15750 / NBRC 105917 / EY 4224 / RW1) (Sphingomonas wittichii).